The chain runs to 265 residues: Hydroxyethylthiazole kinase (265 aa).

M36 provides a ligand contact to substrate. 2 residues coordinate ATP: K112 and S160. G187 contributes to the substrate binding site.

It belongs to the Thz kinase family. The cofactor is Mg(2+).

The enzyme catalyses 5-(2-hydroxyethyl)-4-methylthiazole + ATP = 4-methyl-5-(2-phosphooxyethyl)-thiazole + ADP + H(+). It functions in the pathway cofactor biosynthesis; thiamine diphosphate biosynthesis; 4-methyl-5-(2-phosphoethyl)-thiazole from 5-(2-hydroxyethyl)-4-methylthiazole: step 1/1. In terms of biological role, catalyzes the phosphorylation of the hydroxyl group of 4-methyl-5-beta-hydroxyethylthiazole (THZ). This Clostridium perfringens (strain ATCC 13124 / DSM 756 / JCM 1290 / NCIMB 6125 / NCTC 8237 / Type A) protein is Hydroxyethylthiazole kinase.